A 250-amino-acid chain; its full sequence is 3-deoxy-manno-octulosonate cytidylyltransferase (250 aa).

Belongs to the KdsB family.

The protein resides in the cytoplasm. It carries out the reaction 3-deoxy-alpha-D-manno-oct-2-ulosonate + CTP = CMP-3-deoxy-beta-D-manno-octulosonate + diphosphate. It participates in nucleotide-sugar biosynthesis; CMP-3-deoxy-D-manno-octulosonate biosynthesis; CMP-3-deoxy-D-manno-octulosonate from 3-deoxy-D-manno-octulosonate and CTP: step 1/1. It functions in the pathway bacterial outer membrane biogenesis; lipopolysaccharide biosynthesis. Functionally, activates KDO (a required 8-carbon sugar) for incorporation into bacterial lipopolysaccharide in Gram-negative bacteria. This is 3-deoxy-manno-octulosonate cytidylyltransferase from Yersinia enterocolitica serotype O:8 / biotype 1B (strain NCTC 13174 / 8081).